Consider the following 620-residue polypeptide: Ran-binding protein 10 (620 aa).

Positions 1-41 are disordered; the sequence is MAAATADPGAGNPQPGDSSGGGAGGGLPSPGEQELSRRLQR. Position 2 is an N-acetylalanine (Ala-2). Positions 18–28 are enriched in gly residues; that stretch reads SSGGGAGGGLP. Residues 35-222 form the B30.2/SPRY domain; that stretch reads LSRRLQRLYP…VDANFGQQPF (188 aa). The LisH domain maps to 253–285; the sequence is WQAVLQNMVSSYLVHHGYCATATAFARMTETPI. The CTLH domain occupies 291–348; sequence SIKNRQKIQKLVLEGRVGEAIETTQRFYPGLLEHNPNLLFMLKCRQFVEMVNGTDSEV. Polar residues predominate over residues 347–398; that stretch reads EVRSLSSRSPKSQDSYPGSPSLSPRHGPSSSHMHNTGADSPSCSNGVASTKS. Residues 347–458 form a disordered region; it reads EVRSLSSRSP…ETSDSEMEME (112 aa). Ser-361 carries the phosphoserine modification. Tyr-362 carries the post-translational modification Phosphotyrosine. Phosphoserine occurs at positions 365, 367, 369, 422, 451, and 453. The segment covering 409–436 has biased composition (low complexity); the sequence is SSSSSSSSSSSSSSPSSVNYSESNSTDS.

It belongs to the RANBP9/10 family. May form homodimers. Identified in the CTLH complex that contains GID4, RANBP9 and/or RANBP10, MKLN1, MAEA, RMND5A (or alternatively its paralog RMND5B), GID8, ARMC8, WDR26 and YPEL5. Within this complex, MAEA, RMND5A (or alternatively its paralog RMND5B), GID8, WDR26, and RANBP9 and/or RANBP10 form the catalytic core, while GID4, MKLN1, ARMC8 and YPEL5 have ancillary roles. Interacts with RAN and RANBP9. Interacts with the HGF receptor MET. Interacts with AR. Interacts with TUBB1. Interacts with YPEL5. May interact with TUBB5. Interacts with DDX4. Broadly expressed, with highest levels in skeletal muscle.

Its subcellular location is the cytoplasm. It localises to the cytosol. The protein resides in the nucleus. Its function is as follows. May act as an adapter protein to couple membrane receptors to intracellular signaling pathways. Core component of the CTLH E3 ubiquitin-protein ligase complex that selectively accepts ubiquitin from UBE2H and mediates ubiquitination and subsequent proteasomal degradation of the transcription factor HBP1. Enhances dihydrotestosterone-induced transactivation activity of AR, as well as dexamethasone-induced transactivation activity of NR3C1, but does not affect estrogen-induced transactivation. Acts as a guanine nucleotide exchange factor (GEF) for RAN GTPase. May play an essential role in hemostasis and in maintaining microtubule dynamics with respect to both platelet shape and function. This chain is Ran-binding protein 10 (RANBP10), found in Homo sapiens (Human).